The following is a 488-amino-acid chain: Probable cytosol aminopeptidase (488 aa).

The Mn(2+) site is built by Lys-253 and Asp-258. The active site involves Lys-265. The Mn(2+) site is built by Asp-276, Asp-335, and Glu-337. Arg-339 is a catalytic residue.

This sequence belongs to the peptidase M17 family. The cofactor is Mn(2+).

The protein resides in the cytoplasm. The catalysed reaction is Release of an N-terminal amino acid, Xaa-|-Yaa-, in which Xaa is preferably Leu, but may be other amino acids including Pro although not Arg or Lys, and Yaa may be Pro. Amino acid amides and methyl esters are also readily hydrolyzed, but rates on arylamides are exceedingly low.. It carries out the reaction Release of an N-terminal amino acid, preferentially leucine, but not glutamic or aspartic acids.. Its function is as follows. Presumably involved in the processing and regular turnover of intracellular proteins. Catalyzes the removal of unsubstituted N-terminal amino acids from various peptides. This Dinoroseobacter shibae (strain DSM 16493 / NCIMB 14021 / DFL 12) protein is Probable cytosol aminopeptidase.